The chain runs to 458 residues: Ribosomal protein uS12 methylthiotransferase RimO (458 aa).

The MTTase N-terminal domain maps to Pro-6–Pro-116. [4Fe-4S] cluster contacts are provided by Cys-15, Cys-51, Cys-80, Cys-147, Cys-151, and Cys-154. The region spanning Leu-133–Arg-371 is the Radical SAM core domain. In terms of domain architecture, TRAM spans Glu-373–Pro-441.

This sequence belongs to the methylthiotransferase family. RimO subfamily. It depends on [4Fe-4S] cluster as a cofactor.

The protein resides in the cytoplasm. The catalysed reaction is L-aspartate(89)-[ribosomal protein uS12]-hydrogen + (sulfur carrier)-SH + AH2 + 2 S-adenosyl-L-methionine = 3-methylsulfanyl-L-aspartate(89)-[ribosomal protein uS12]-hydrogen + (sulfur carrier)-H + 5'-deoxyadenosine + L-methionine + A + S-adenosyl-L-homocysteine + 2 H(+). Functionally, catalyzes the methylthiolation of an aspartic acid residue of ribosomal protein uS12. The sequence is that of Ribosomal protein uS12 methylthiotransferase RimO from Xanthomonas euvesicatoria pv. vesicatoria (strain 85-10) (Xanthomonas campestris pv. vesicatoria).